Reading from the N-terminus, the 215-residue chain is uncharacterized protein (215 aa).

Transmembrane regions (helical) follow at residues 21 to 40 (IIKYIVIFFLFYIISTVLIN), 50 to 69 (LIFSVICLLISLISFSTIIF), 95 to 117 (FVAIFICTTVGLIFVLPVIYVFF), 122 to 144 (LEIALFFISVWMIFVLSSSLVVL), 157 to 179 (NFVGTFIMPLLIPNIIMTGLILQ), and 185 to 207 (LIFIMIGINLIFLPVSFCLSAYL).

Belongs to the CcmB/CycW/HelB family.

The protein localises to the cell membrane. This is an uncharacterized protein from Rickettsia prowazekii (strain Madrid E).